A 60-amino-acid polypeptide reads, in one-letter code: uncharacterized protein (60 aa).

This is an uncharacterized protein from Thermotoga maritima (strain ATCC 43589 / DSM 3109 / JCM 10099 / NBRC 100826 / MSB8).